The sequence spans 88 residues: Small ribosomal subunit protein uS17 (88 aa).

It belongs to the universal ribosomal protein uS17 family. Part of the 30S ribosomal subunit.

Its function is as follows. One of the primary rRNA binding proteins, it binds specifically to the 5'-end of 16S ribosomal RNA. The polypeptide is Small ribosomal subunit protein uS17 (Mycoplasmopsis agalactiae (strain NCTC 10123 / CIP 59.7 / PG2) (Mycoplasma agalactiae)).